The primary structure comprises 91 residues: UPF0728 protein v1g117062 (91 aa).

Belongs to the UPF0728 family.

The protein is UPF0728 protein v1g117062 of Nematostella vectensis (Starlet sea anemone).